The primary structure comprises 101 residues: Small ribosomal subunit protein uS14 (101 aa).

The protein belongs to the universal ribosomal protein uS14 family. As to quaternary structure, part of the 30S ribosomal subunit. Contacts proteins S3 and S10.

In terms of biological role, binds 16S rRNA, required for the assembly of 30S particles and may also be responsible for determining the conformation of the 16S rRNA at the A site. The chain is Small ribosomal subunit protein uS14 from Polynucleobacter necessarius subsp. necessarius (strain STIR1).